Reading from the N-terminus, the 385-residue chain is Tryptophan--tRNA ligase (385 aa).

The 'HIGH' region signature appears at 82–90; sequence PSGPMHIGH. The short motif at 253–257 is the 'KMSKS' region element; the sequence is KMSAS.

Belongs to the class-I aminoacyl-tRNA synthetase family.

Its subcellular location is the cytoplasm. The enzyme catalyses tRNA(Trp) + L-tryptophan + ATP = L-tryptophyl-tRNA(Trp) + AMP + diphosphate + H(+). The protein is Tryptophan--tRNA ligase of Pyrococcus abyssi (strain GE5 / Orsay).